A 45-amino-acid chain; its full sequence is MNSALFLAKLPEAYAIFKPIIDILPVIPVFFLLLAFVWQAAIGFR.

Positions 1-8 (MNSALFLA) are excised as a propeptide. A helical transmembrane segment spans residues 23 to 43 (ILPVIPVFFLLLAFVWQAAIG).

It belongs to the PsbK family. In terms of assembly, PSII is composed of 1 copy each of membrane proteins PsbA, PsbB, PsbC, PsbD, PsbE, PsbF, PsbH, PsbI, PsbJ, PsbK, PsbL, PsbM, PsbT, PsbX, PsbY, PsbZ, Psb30/Ycf12, at least 3 peripheral proteins of the oxygen-evolving complex and a large number of cofactors. It forms dimeric complexes.

Its subcellular location is the plastid. It is found in the chloroplast thylakoid membrane. In terms of biological role, one of the components of the core complex of photosystem II (PSII). PSII is a light-driven water:plastoquinone oxidoreductase that uses light energy to abstract electrons from H(2)O, generating O(2) and a proton gradient subsequently used for ATP formation. It consists of a core antenna complex that captures photons, and an electron transfer chain that converts photonic excitation into a charge separation. The polypeptide is Photosystem II reaction center protein K (Pyropia yezoensis (Susabi-nori)).